Consider the following 419-residue polypeptide: Serine hydroxymethyltransferase (419 aa).

(6S)-5,6,7,8-tetrahydrofolate is bound by residues Leu-121 and 125-127 (GHL). Residue Lys-230 is modified to N6-(pyridoxal phosphate)lysine. 355 to 357 (SPF) is a (6S)-5,6,7,8-tetrahydrofolate binding site.

It belongs to the SHMT family. As to quaternary structure, homodimer. The cofactor is pyridoxal 5'-phosphate.

The protein resides in the cytoplasm. It catalyses the reaction (6R)-5,10-methylene-5,6,7,8-tetrahydrofolate + glycine + H2O = (6S)-5,6,7,8-tetrahydrofolate + L-serine. It functions in the pathway one-carbon metabolism; tetrahydrofolate interconversion. Its pathway is amino-acid biosynthesis; glycine biosynthesis; glycine from L-serine: step 1/1. Catalyzes the reversible interconversion of serine and glycine with tetrahydrofolate (THF) serving as the one-carbon carrier. This reaction serves as the major source of one-carbon groups required for the biosynthesis of purines, thymidylate, methionine, and other important biomolecules. Also exhibits THF-independent aldolase activity toward beta-hydroxyamino acids, producing glycine and aldehydes, via a retro-aldol mechanism. In Streptococcus equi subsp. equi (strain 4047), this protein is Serine hydroxymethyltransferase.